We begin with the raw amino-acid sequence, 426 residues long: MVKFETVRGMKDYIGIDAEKIRYLESTFRDLAKKYGYSEIITPVVEEFKLFELKGGEELRQTMYVFKDKADREISLRPEITPSVARAYIQNLQSSPKPIRLFYFGTVYRYDEPQYGRYREFRQAGIEMIGDSSILADVEVLDLLYNFYDKLNLSKDITIKINNIGIFRKIMDKYNIEDNLQEHVLHLIDKNKVDEALVILEKNIKNKDIMDFLNMILTKKEAKLEDIESLAELEEVSKLDIKNEFEYLLRLSRILSSLNVKFKVDLGFVRGLAYYTGLIFEVLHPSVQFSIAGGGRYDKLIELYGGLPSPAIGFAIGVERTLLVIKDLKVEEPINVIVVGISEEAIPAMFTVSRMLRKEEYKVVINTKDQPLSKLLPYYASQGFKLAIIIGKQELEKNMITVRNLITRKQISIPLENVLDAIKQTL.

Belongs to the class-II aminoacyl-tRNA synthetase family.

It localises to the cytoplasm. The catalysed reaction is tRNA(His) + L-histidine + ATP = L-histidyl-tRNA(His) + AMP + diphosphate + H(+). This Saccharolobus solfataricus (strain ATCC 35092 / DSM 1617 / JCM 11322 / P2) (Sulfolobus solfataricus) protein is Histidine--tRNA ligase.